The chain runs to 61 residues: Small ribosomal subunit protein uS14B (61 aa).

Zn(2+) contacts are provided by C24, C27, C40, and C43.

The protein belongs to the universal ribosomal protein uS14 family. Zinc-binding uS14 subfamily. Part of the 30S ribosomal subunit. Contacts proteins S3 and S10. It depends on Zn(2+) as a cofactor.

In terms of biological role, binds 16S rRNA, required for the assembly of 30S particles and may also be responsible for determining the conformation of the 16S rRNA at the A site. This is Small ribosomal subunit protein uS14B from Nocardia farcinica (strain IFM 10152).